The following is a 244-amino-acid chain: 5-oxoprolinase subunit A (244 aa).

This sequence belongs to the LamB/PxpA family. As to quaternary structure, forms a complex composed of PxpA, PxpB and PxpC.

It carries out the reaction 5-oxo-L-proline + ATP + 2 H2O = L-glutamate + ADP + phosphate + H(+). Functionally, catalyzes the cleavage of 5-oxoproline to form L-glutamate coupled to the hydrolysis of ATP to ADP and inorganic phosphate. The sequence is that of 5-oxoprolinase subunit A from Salmonella typhi.